The following is a 205-amino-acid chain: Holliday junction branch migration complex subunit RuvA (205 aa).

The tract at residues Met1 to Arg64 is domain I. Positions Ser65 to Ile143 are domain II. Residues Arg144–Ala154 form a flexible linker region. Positions Ala154–Lys205 are domain III.

This sequence belongs to the RuvA family. Homotetramer. Forms an RuvA(8)-RuvB(12)-Holliday junction (HJ) complex. HJ DNA is sandwiched between 2 RuvA tetramers; dsDNA enters through RuvA and exits via RuvB. An RuvB hexamer assembles on each DNA strand where it exits the tetramer. Each RuvB hexamer is contacted by two RuvA subunits (via domain III) on 2 adjacent RuvB subunits; this complex drives branch migration. In the full resolvosome a probable DNA-RuvA(4)-RuvB(12)-RuvC(2) complex forms which resolves the HJ.

It is found in the cytoplasm. Functionally, the RuvA-RuvB-RuvC complex processes Holliday junction (HJ) DNA during genetic recombination and DNA repair, while the RuvA-RuvB complex plays an important role in the rescue of blocked DNA replication forks via replication fork reversal (RFR). RuvA specifically binds to HJ cruciform DNA, conferring on it an open structure. The RuvB hexamer acts as an ATP-dependent pump, pulling dsDNA into and through the RuvAB complex. HJ branch migration allows RuvC to scan DNA until it finds its consensus sequence, where it cleaves and resolves the cruciform DNA. In Bradyrhizobium sp. (strain BTAi1 / ATCC BAA-1182), this protein is Holliday junction branch migration complex subunit RuvA.